A 215-amino-acid polypeptide reads, in one-letter code: Large ribosomal subunit protein uL3 (215 aa).

The interval 134-166 (MAHGSKNHRAPGSIGAGTTPGRVFPGKRMPGRM) is disordered.

It belongs to the universal ribosomal protein uL3 family. Part of the 50S ribosomal subunit. Forms a cluster with proteins L14 and L19.

In terms of biological role, one of the primary rRNA binding proteins, it binds directly near the 3'-end of the 23S rRNA, where it nucleates assembly of the 50S subunit. The polypeptide is Large ribosomal subunit protein uL3 (Gloeobacter violaceus (strain ATCC 29082 / PCC 7421)).